The chain runs to 442 residues: Adenylosuccinate synthetase (442 aa).

Residues 25–31, 53–55, and Lys62 each bind GTP; these read GDEGKGK and GHT. Catalysis depends on Asp26, which acts as the Proton acceptor. The Mg(2+) site is built by Asp26 and Gly53. Residues 26 to 29 and 51 to 54 each bind IMP; these read DEGK and NAGH. His54 functions as the Proton donor in the catalytic mechanism. Residues Thr141, Arg155, Asn232, and Thr247 each contribute to the IMP site. Thr307 serves as a coordination point for GTP. Residue 307–313 participates in substrate binding; it reads TTTKRPR. Arg311 provides a ligand contact to IMP. GTP is bound by residues Arg313, 339-341, and 425-427; these read KLD and GVG.

It belongs to the adenylosuccinate synthetase family. As to quaternary structure, homodimer. Mg(2+) is required as a cofactor.

It localises to the cytoplasm. It carries out the reaction IMP + L-aspartate + GTP = N(6)-(1,2-dicarboxyethyl)-AMP + GDP + phosphate + 2 H(+). It functions in the pathway purine metabolism; AMP biosynthesis via de novo pathway; AMP from IMP: step 1/2. Its activity is regulated as follows. Inhibited by hadacidin. Activated by fructose 1,6-bisphosphate. Functionally, plays an important role in the salvage pathway for purine nucleotide biosynthesis. Catalyzes the first committed step in the biosynthesis of AMP from IMP. The sequence is that of Adenylosuccinate synthetase (Adss) from Plasmodium falciparum.